Here is a 202-residue protein sequence, read N- to C-terminus: Probable thymidylate kinase (202 aa).

13-20 (GIDGSGKT) contributes to the ATP binding site.

This sequence belongs to the thymidylate kinase family.

It catalyses the reaction dTMP + ATP = dTDP + ADP. The protein is Probable thymidylate kinase of Picrophilus torridus (strain ATCC 700027 / DSM 9790 / JCM 10055 / NBRC 100828 / KAW 2/3).